A 387-amino-acid chain; its full sequence is Putative acid--amine ligase YjfC (387 aa).

Arg101–Asp103 serves as a coordination point for ATP. Residues Asp103, Glu116, and Asn118 each contribute to the Mg(2+) site. ATP-binding positions include Lys265, Lys302, Gly309, Gln337, and Leu372 to Thr374.

This sequence belongs to the glutathionylspermidine synthase preATP-grasp family.

Its function is as follows. May be a ligase forming an amide bond. Shows ATPase activity. Despite its similarity to the C-terminal synthetase domain of Gss, is not a glutathionylspermidine (Gsp) synthetase. Cannot synthesize Gsp, glutathione (GSH), or GSH intermediates, from GSH and spermidine, cysteine and glutamate, gamma-glutamylcysteine and spermidine, and gamma-glutamylcysteine and glycine. Does not bind to Gsp. This is Putative acid--amine ligase YjfC (yjfC) from Escherichia coli (strain K12).